Consider the following 158-residue polypeptide: NADH-quinone oxidoreductase subunit B (158 aa).

C37, C38, C102, and C132 together coordinate [4Fe-4S] cluster.

It belongs to the complex I 20 kDa subunit family. In terms of assembly, NDH-1 is composed of 14 different subunits. Subunits NuoB, C, D, E, F, and G constitute the peripheral sector of the complex. Requires [4Fe-4S] cluster as cofactor.

The protein localises to the cell inner membrane. It carries out the reaction a quinone + NADH + 5 H(+)(in) = a quinol + NAD(+) + 4 H(+)(out). Functionally, NDH-1 shuttles electrons from NADH, via FMN and iron-sulfur (Fe-S) centers, to quinones in the respiratory chain. Couples the redox reaction to proton translocation (for every two electrons transferred, four hydrogen ions are translocated across the cytoplasmic membrane), and thus conserves the redox energy in a proton gradient. The polypeptide is NADH-quinone oxidoreductase subunit B (Nitrosomonas europaea (strain ATCC 19718 / CIP 103999 / KCTC 2705 / NBRC 14298)).